The sequence spans 174 residues: ATP synthase subunit d, mitochondrial (174 aa).

Serine 2 carries the post-translational modification N-acetylserine.

It belongs to the ATPase d subunit family.

Its subcellular location is the mitochondrion inner membrane. Mitochondrial membrane ATP synthase (F(1)F(0) ATP synthase or Complex V) produces ATP from ADP in the presence of a proton gradient across the membrane which is generated by electron transport complexes of the respiratory chain. F-type ATPases consist of two structural domains, F(1) - containing the extramembraneous catalytic core, and F(0) - containing the membrane proton channel, linked together by a central stalk and a peripheral stalk. During catalysis, ATP synthesis in the catalytic domain of F(1) is coupled via a rotary mechanism of the central stalk subunits to proton translocation. Part of the complex F(0) domain and the peripheric stalk, which acts as a stator to hold the catalytic alpha(3)beta(3) subcomplex and subunit a/ATP6 static relative to the rotary elements. This Kluyveromyces lactis (strain ATCC 8585 / CBS 2359 / DSM 70799 / NBRC 1267 / NRRL Y-1140 / WM37) (Yeast) protein is ATP synthase subunit d, mitochondrial (ATP7).